Consider the following 404-residue polypeptide: S-adenosylmethionine synthase (404 aa).

H17 is an ATP binding site. Position 19 (D19) interacts with Mg(2+). E45 is a K(+) binding site. The L-methionine site is built by E58 and Q101. A flexible loop region spans residues Q101–R111. ATP contacts are provided by residues D172 to K174, R245 to F246, D254, R260 to K261, A277, and K281. D254 provides a ligand contact to L-methionine. K285 contributes to the L-methionine binding site.

This sequence belongs to the AdoMet synthase family. As to quaternary structure, homotetramer; dimer of dimers. The cofactor is Mg(2+). Requires K(+) as cofactor.

It is found in the cytoplasm. It carries out the reaction L-methionine + ATP + H2O = S-adenosyl-L-methionine + phosphate + diphosphate. It functions in the pathway amino-acid biosynthesis; S-adenosyl-L-methionine biosynthesis; S-adenosyl-L-methionine from L-methionine: step 1/1. In terms of biological role, catalyzes the formation of S-adenosylmethionine (AdoMet) from methionine and ATP. The overall synthetic reaction is composed of two sequential steps, AdoMet formation and the subsequent tripolyphosphate hydrolysis which occurs prior to release of AdoMet from the enzyme. The polypeptide is S-adenosylmethionine synthase (Chlorobium luteolum (strain DSM 273 / BCRC 81028 / 2530) (Pelodictyon luteolum)).